The following is a 1081-amino-acid chain: Cellulose synthase A catalytic subunit 1 [UDP-forming] (1081 aa).

At M1 the chain carries N-acetylmethionine. Over 1 to 270 the chain is Cytoplasmic; that stretch reads MEASAGLVAG…SRVVPIPSSR (270 aa). Zn(2+) is bound by residues C39, C42, C58, C61, C66, C69, C81, and C84. The RING-type; degenerate zinc-finger motif lies at 39–85; that stretch reads CQICGDDVGLAETGDVFVACNECAFPVCRPCYEYERKDGTQCCPQCK. The segment at 118 to 195 is disordered; that stretch reads GANKARHQRH…RQPVPVRIVD (78 aa). Basic and acidic residues predominate over residues 127-139; it reads HGEEFSSSSRHES. Residues 158 to 168 are compositionally biased toward polar residues; sequence PDTQSVRTTSG. A helical transmembrane segment spans residues 271–291; the sequence is LTPYRVVIILRLIILCFFLQY. Residues 292–299 lie on the Extracellular side of the membrane; that stretch reads RTTHPVKN. Residues 300 to 320 traverse the membrane as a helical segment; the sequence is AYPLWLTSVICEIWFAFSWLL. Residues 321 to 856 are Cytoplasmic-facing; that stretch reads DQFPKWYPIN…LLERIAYINT (536 aa). UDP-alpha-D-glucose-binding residues include S359, K365, E366, and D395. The active site involves D395. The stretch at 449-476 forms a coiled coil; it reads VKERRAMKREYEEFKVRINALVAKAQKI. K536 is a binding site for UDP-alpha-D-glucose. Mn(2+) contacts are provided by K537 and D561. The active site involves D780. The chain crosses the membrane as a helical span at residues 857 to 877; sequence IVYPITSIPLIAYCILPAFCL. The Extracellular segment spans residues 878 to 889; sequence ITDRFIIPEISN. A helical membrane pass occupies residues 890–910; the sequence is YASIWFILLFISIAVTGILEL. The Cytoplasmic portion of the chain corresponds to 911-925; it reads RWSGVSIEDWWRNEQ. The helical transmembrane segment at 926-946 threads the bilayer; it reads FWVIGGTSAHLFAVFQGLLKV. Topologically, residues 947–976 are extracellular; that stretch reads LAGIDTNFTVTSKATDEDGDFAELYIFKWT. The N-linked (GlcNAc...) asparagine glycan is linked to N953. The chain crosses the membrane as a helical span at residues 977-997; it reads ALLIPPTTVLLVNLIGIVAGV. Topologically, residues 998 to 1008 are cytoplasmic; sequence SYAVNSGYQSW. A helical membrane pass occupies residues 1009 to 1029; sequence GPLFGKLFFALWVIAHLYPFL. Over 1030–1038 the chain is Extracellular; sequence KGLLGRQNR. Residues 1039–1059 traverse the membrane as a helical segment; sequence TPTIVIVWSVLLASIFSLLWV. Over 1060 to 1081 the chain is Cytoplasmic; that stretch reads RINPFVDANPNANNFNGKGGVF.

The protein belongs to the glycosyltransferase 2 family. Plant cellulose synthase subfamily. As to quaternary structure, interacts with CESA3 and CESA6. Assembly with CESA3 and CESA6 is required for functional complex in primary cell wall cellulose synthesis. Interacts with STL1 and STL2, but not with GOT1. Binds to CSI1. Interacts with PAT24/TIP1. Zn(2+) is required as a cofactor. Requires Mn(2+) as cofactor. S-acylated. Expressed in germinating seeds, seedlings, roots, stems, shoots leaves and flowers, but not in mature flowers.

Its subcellular location is the cell membrane. The catalysed reaction is [(1-&gt;4)-beta-D-glucosyl](n) + UDP-alpha-D-glucose = [(1-&gt;4)-beta-D-glucosyl](n+1) + UDP + H(+). It functions in the pathway glycan metabolism; plant cellulose biosynthesis. Catalytic subunit of cellulose synthase terminal complexes ('rosettes'), required for beta-1,4-glucan microfibril crystallization, a major mechanism of the cell wall formation. Involved in the primary cell wall formation. Required during embryogenesis for cell elongation, orientation of cell expansion and complex cell wall formations, such as interdigitated pattern of epidermal pavement cells, stomatal guard cells and trichomes. Plays a role in lateral roots formation, but seems not necessary for the development of tip-growing cells such as root hairs. The presence of each protein CESA1 and CESA6 is critical for cell expansion after germination. The sequence is that of Cellulose synthase A catalytic subunit 1 [UDP-forming] from Arabidopsis thaliana (Mouse-ear cress).